A 61-amino-acid chain; its full sequence is Small ribosomal subunit protein eS30A (61 aa).

The disordered stretch occupies residues 1 to 36 (MGKVHGSLARAGKVKSQTPKVEKQEKPKQPKGRAYK).

The protein belongs to the eukaryotic ribosomal protein eS30 family. As to quaternary structure, component of the small ribosomal subunit (SSU). Mature yeast ribosomes consist of a small (40S) and a large (60S) subunit. The 40S small subunit contains 1 molecule of ribosomal RNA (18S rRNA) and at least 33 different proteins. The large 60S subunit contains 3 rRNA molecules (25S, 5.8S and 5S rRNA) and at least 46 different proteins.

It is found in the cytoplasm. The protein resides in the nucleus. Component of the ribosome, a large ribonucleoprotein complex responsible for the synthesis of proteins in the cell. The small ribosomal subunit (SSU) binds messenger RNAs (mRNAs) and translates the encoded message by selecting cognate aminoacyl-transfer RNA (tRNA) molecules. The large subunit (LSU) contains the ribosomal catalytic site termed the peptidyl transferase center (PTC), which catalyzes the formation of peptide bonds, thereby polymerizing the amino acids delivered by tRNAs into a polypeptide chain. The nascent polypeptides leave the ribosome through a tunnel in the LSU and interact with protein factors that function in enzymatic processing, targeting, and the membrane insertion of nascent chains at the exit of the ribosomal tunnel. In Schizosaccharomyces pombe (strain 972 / ATCC 24843) (Fission yeast), this protein is Small ribosomal subunit protein eS30A (rps3001).